The primary structure comprises 162 residues: Caveolin-2 (162 aa).

Over 1 to 86 (MGLETEKADV…FEISKYVMYK (86 aa)) the chain is Cytoplasmic. Residue tyrosine 19 is modified to Phosphotyrosine; by SRC. 2 positions are modified to phosphoserine: serine 20 and serine 23. A Phosphotyrosine; by SRC modification is found at tyrosine 27. Position 36 is a phosphoserine (serine 36). The segment at residues 87–107 (FLTVFLAIPLAFIAGILFATL) is an intramembrane region (helical). Residues 108–162 (SCLHIWILMPFVKTCLMVLPSVQTIWKSVTDVFIAPLCTSIGRSFSSVSLQLSQD) lie on the Cytoplasmic side of the membrane.

The protein belongs to the caveolin family. In terms of assembly, monomer or homodimer. Interacts with CAV1; the interaction forms a stable heterooligomeric complex that is required for targeting to lipid rafts and for caveolae formation. Tyrosine phosphorylated forms do not form heterooligomers with the Tyr-19-phosphorylated form existing as a monomer or dimer, and the Tyr-27-form as a monomer only. Interacts (tyrosine phosphorylated form) with the SH2 domain-containing proteins, RASA1, NCK1 and SRC. Interacts (tyrosine phosphorylated form) with INSR, the interaction (Tyr-27-phosphorylated form) is increased on insulin stimulation. Interacts (Tyr-19 phosphorylated form) with MAPK1 (phosphorylated form); the interaction, promoted by insulin, leads to nuclear location and MAPK1 activation. Interacts with STAT3; the interaction is increased on insulin-induced tyrosine phosphorylation leading to STAT activation. Phosphorylated on serine and tyrosine residues. CAV1 promotes phosphorylation on Ser-23 which then targets the complex to the plasma membrane, lipid rafts and caveolae. Phosphorylation on Ser-36 appears to modulate mitosis in endothelial cells. Phosphorylation on both Tyr-19 and Tyr-27 is required for insulin-induced 'Ser-727' phosphorylation of STAT3 and its activation. Phosphorylation on Tyr-19 is required for insulin-induced phosphorylation of MAPK1 and DNA binding of STAT3. Tyrosine phosphorylation is induced by both EGF and insulin (By. similarity).

The protein resides in the nucleus. It is found in the cytoplasm. The protein localises to the golgi apparatus membrane. Its subcellular location is the cell membrane. It localises to the membrane. The protein resides in the caveola. May act as a scaffolding protein within caveolar membranes. Interacts directly with G-protein alpha subunits and can functionally regulate their activity. Acts as an accessory protein in conjunction with CAV1 in targeting to lipid rafts and driving caveolae formation. The Ser-36 phosphorylated form has a role in modulating mitosis in endothelial cells. Positive regulator of cellular mitogenesis of the MAPK signaling pathway. Required for the insulin-stimulated nuclear translocation and activation of MAPK1 and STAT3, and the subsequent regulation of cell cycle progression. The chain is Caveolin-2 (CAV2) from Papio anubis (Olive baboon).